Consider the following 29-residue polypeptide: MDIVSIAWAALMVVFSFSLSLVVWGRSGL.

The chain crosses the membrane as a helical span at residues 3 to 23 (IVSIAWAALMVVFSFSLSLVV).

Belongs to the PetN family. As to quaternary structure, the 4 large subunits of the cytochrome b6-f complex are cytochrome b6, subunit IV (17 kDa polypeptide, PetD), cytochrome f and the Rieske protein, while the 4 small subunits are PetG, PetL, PetM and PetN. The complex functions as a dimer.

It is found in the plastid. Its subcellular location is the chloroplast thylakoid membrane. Functionally, component of the cytochrome b6-f complex, which mediates electron transfer between photosystem II (PSII) and photosystem I (PSI), cyclic electron flow around PSI, and state transitions. The chain is Cytochrome b6-f complex subunit 8 from Phaseolus vulgaris (Kidney bean).